A 467-amino-acid chain; its full sequence is Argininosuccinate lyase (467 aa).

This sequence belongs to the lyase 1 family. Argininosuccinate lyase subfamily.

It is found in the cytoplasm. It carries out the reaction 2-(N(omega)-L-arginino)succinate = fumarate + L-arginine. It participates in amino-acid biosynthesis; L-arginine biosynthesis; L-arginine from L-ornithine and carbamoyl phosphate: step 3/3. In Rhizobium etli (strain CIAT 652), this protein is Argininosuccinate lyase.